A 167-amino-acid chain; its full sequence is SAR-endolysin (167 aa).

The chain crosses the membrane as a helical; Signal-anchor for type II membrane protein span at residues V11 to G31. Active-site proton donor/acceptor residues include E37 and D46.

This sequence belongs to the glycosyl hydrolase 24 family.

The protein localises to the host cell inner membrane. It carries out the reaction Hydrolysis of (1-&gt;4)-beta-linkages between N-acetylmuramic acid and N-acetyl-D-glucosamine residues in a peptidoglycan and between N-acetyl-D-glucosamine residues in chitodextrins.. Functionally, signal-arrest-release (SAR) endolysin with lysozyme activity that degrades host peptidoglycans and participates with the pinholin and spanin proteins in the sequential events which lead to programmed host cell lysis releasing the mature viral particles. Once the pinholin has permeabilized the host cell membrane, the SAR-endolysin is released into the periplasm where it breaks down the peptidoglycan layer. The chain is SAR-endolysin (19) from Bacteriophage PS34.